A 261-amino-acid chain; its full sequence is MLLAIDAGNTNVVFAVFEGDVKRGQWRVSTDGRRTADEHAVWLVALMAMKGLTPKDIHAAILSSVVPAQTGPLTTLCEEHFGCTPMRVGDPGVRLGLEVRIDNPKEAGADRLVNAVAAVATYPPPLVVIDIGTGTTFDVVDANGDFAGGVIAPGPVLSLDALHRVAAQLPKVDILRPDRVIGKGTVAAMQSGMFWGYTGMIEGILTRIKAELSPTGDPPVTVIGTGGLVRLFAEGSSLVDAIDADLTLRGLRLIHQRNAAR.

6-13 (DAGNTNVV) is a binding site for ATP. Residue 108–111 (GADR) coordinates substrate. The active-site Proton acceptor is aspartate 110. Aspartate 130 is a K(+) binding site. Threonine 133 lines the ATP pocket. Threonine 185 contributes to the substrate binding site.

It belongs to the type III pantothenate kinase family. In terms of assembly, homodimer. It depends on NH4(+) as a cofactor. The cofactor is K(+).

It is found in the cytoplasm. The catalysed reaction is (R)-pantothenate + ATP = (R)-4'-phosphopantothenate + ADP + H(+). The protein operates within cofactor biosynthesis; coenzyme A biosynthesis; CoA from (R)-pantothenate: step 1/5. Catalyzes the phosphorylation of pantothenate (Pan), the first step in CoA biosynthesis. The protein is Type III pantothenate kinase of Rhodospirillum centenum (strain ATCC 51521 / SW).